The following is a 187-amino-acid chain: Peroxisome assembly protein 22 (187 aa).

Residues 7–29 (NTFFGLAALGALGLGYSVYKSFI) form a helical membrane-spanning segment.

Belongs to the peroxin-22 family. In terms of assembly, interacts with PEX4.

Its subcellular location is the peroxisome membrane. Functionally, involved in peroxisome biogenesis. In Komagataella pastoris (Yeast), this protein is Peroxisome assembly protein 22 (PEX22).